We begin with the raw amino-acid sequence, 201 residues long: Prostamide/prostaglandin F synthase (201 aa).

Belongs to the peroxiredoxin-like PRXL2 family. Prostamide/prostaglandin F synthase subfamily.

It is found in the cytoplasm. The protein resides in the cytosol. The enzyme catalyses prostaglandin H2 + [thioredoxin]-dithiol = prostaglandin F2alpha + [thioredoxin]-disulfide. It catalyses the reaction prostamide F2alpha + [thioredoxin]-disulfide = prostamide H2 + [thioredoxin]-dithiol. In terms of biological role, catalyzes the reduction of prostaglandin-ethanolamide H(2) (prostamide H(2)) to prostamide F(2alpha) with NADPH as proton donor. Also able to reduce prostaglandin H(2) to prostaglandin F(2alpha). This Xenopus tropicalis (Western clawed frog) protein is Prostamide/prostaglandin F synthase (prxl2b).